The following is a 391-amino-acid chain: Cell cycle checkpoint control protein RAD9A (391 aa).

Residue Y28 is modified to Phosphotyrosine. A possesses 3'-5' exonuclease activity region spans residues 51–91 (FLFAPLFFQQYQAATPGQDLLRCKILMKSFLSVFRSLAMLE). Residues 266-391 (SDTDSHSQDL…VLAEDSEGEG (126 aa)) are sufficient for interaction with ABL1. Over residues 268 to 282 (TDSHSQDLGSPERHQ) the composition is skewed to basic and acidic residues. Disordered stretches follow at residues 268-301 (TDSH…FAND) and 319-391 (SRVL…EGEG). A phosphoserine mark is found at S272, S277, and S328. Position 341 is a phosphoserine; by CK2 (S341). A phosphoserine mark is found at S375 and S380. S387 is subject to Phosphoserine; by CK2.

It belongs to the rad9 family. In terms of assembly, component of the toroidal 9-1-1 (RAD9-RAD1-HUS1) complex, composed of RAD9A, RAD1 and HUS1. The 9-1-1 complex associates with LIG1, POLB, FEN1, RAD17, HDAC1, RPA1 and RPA2. The 9-1-1 complex associates with the RAD17-RFC complex. RAD9A interacts with BCL2L1, FEN1, RAD9B, ABL1, RPA1, ATAD5 and RPA2. Interacts with DNAJC7. Interacts (when phosphorylated) with TOPBP1. Constitutively phosphorylated on serine and threonine amino acids in absence of DNA damage. Hyperphosphorylated by PRKCD and ABL1 upon DNA damage. Its phosphorylation by PRKCD may be required for the formation of the 9-1-1 complex. Phosphorylated at Ser-341 and Ser-387 by CK2, promoting interaction with TOPBP1.

The protein resides in the nucleus. The enzyme catalyses Exonucleolytic cleavage in the 3'- to 5'-direction to yield nucleoside 5'-phosphates.. In terms of biological role, component of the 9-1-1 cell-cycle checkpoint response complex that plays a major role in DNA repair. The 9-1-1 complex is recruited to DNA lesion upon damage by the RAD17-replication factor C (RFC) clamp loader complex. Acts then as a sliding clamp platform on DNA for several proteins involved in long-patch base excision repair (LP-BER). The 9-1-1 complex stimulates DNA polymerase beta (POLB) activity by increasing its affinity for the 3'-OH end of the primer-template and stabilizes POLB to those sites where LP-BER proceeds; endonuclease FEN1 cleavage activity on substrates with double, nick, or gap flaps of distinct sequences and lengths; and DNA ligase I (LIG1) on long-patch base excision repair substrates. The 9-1-1 complex is necessary for the recruitment of RHNO1 to sites of double-stranded breaks (DSB) occurring during the S phase. RAD9A possesses 3'-&gt;5' double stranded DNA exonuclease activity. In Homo sapiens (Human), this protein is Cell cycle checkpoint control protein RAD9A (RAD9A).